The following is a 341-amino-acid chain: RNA 3'-terminal phosphate cyclase (341 aa).

Residues Q102 and H283–Q287 each bind ATP. Catalysis depends on H308, which acts as the Tele-AMP-histidine intermediate.

The protein belongs to the RNA 3'-terminal cyclase family. Type 1 subfamily.

The protein resides in the cytoplasm. The enzyme catalyses a 3'-end 3'-phospho-ribonucleotide-RNA + ATP = a 3'-end 2',3'-cyclophospho-ribonucleotide-RNA + AMP + diphosphate. Functionally, catalyzes the conversion of 3'-phosphate to a 2',3'-cyclic phosphodiester at the end of RNA. The mechanism of action of the enzyme occurs in 3 steps: (A) adenylation of the enzyme by ATP; (B) transfer of adenylate to an RNA-N3'P to produce RNA-N3'PP5'A; (C) and attack of the adjacent 2'-hydroxyl on the 3'-phosphorus in the diester linkage to produce the cyclic end product. The biological role of this enzyme is unknown but it is likely to function in some aspects of cellular RNA processing. This is RNA 3'-terminal phosphate cyclase from Ectopseudomonas mendocina (strain ymp) (Pseudomonas mendocina).